Here is a 266-residue protein sequence, read N- to C-terminus: uncharacterized protein (266 aa).

The signal sequence occupies residues 1-22; sequence MGYLKRLVLYIVIMVMSVFIIG. Cys23 carries N-palmitoyl cysteine lipidation. Residue Cys23 is the site of S-diacylglycerol cysteine attachment.

It belongs to the staphylococcal tandem lipoprotein family.

Its subcellular location is the cell membrane. This is an uncharacterized protein from Staphylococcus aureus (strain USA300).